The chain runs to 98 residues: NADH-ubiquinone oxidoreductase chain 4L (98 aa).

The next 3 helical transmembrane spans lie at 1-21 (MSMMYFNIFMAFTVSLVGLLM), 29-49 (SLLCLEGMMLSLFVMMSVTIL), and 61-81 (IILLVFAACEAALGLSLLVMV).

It belongs to the complex I subunit 4L family. In terms of assembly, core subunit of respiratory chain NADH dehydrogenase (Complex I) which is composed of 45 different subunits.

It localises to the mitochondrion inner membrane. It carries out the reaction a ubiquinone + NADH + 5 H(+)(in) = a ubiquinol + NAD(+) + 4 H(+)(out). In terms of biological role, core subunit of the mitochondrial membrane respiratory chain NADH dehydrogenase (Complex I) which catalyzes electron transfer from NADH through the respiratory chain, using ubiquinone as an electron acceptor. Part of the enzyme membrane arm which is embedded in the lipid bilayer and involved in proton translocation. The protein is NADH-ubiquinone oxidoreductase chain 4L (MT-ND4L) of Zalophus californianus (California sealion).